The chain runs to 489 residues: Serine/arginine-rich splicing factor 4 (489 aa).

In terms of domain architecture, RRM 1 spans 2–72; that stretch reads PRVYIGRLSY…ERVIVEHARG (71 aa). Disordered stretches follow at residues 72–95 and 169–489; these read GPRR…GRDK and KIRL…HSRS. Phosphoserine is present on residues Ser78 and Ser84. The region spanning 104–177 is the RRM 2 domain; it reads YRLIVENLSS…RKIRLVEDKP (74 aa). Composition is skewed to basic residues over residues 179–206 and 214–246; these read SRRR…KSRS and SHSK…KKEK. A compositionally biased stretch (basic and acidic residues) spans 247–279; sequence SRSPSKDNKSRSRSRSPDKSRSKSKDHAEDKLQ. 3 positions are modified to phosphoserine: Ser289, Ser291, and Ser293. Over residues 293-332 the composition is skewed to basic and acidic residues; that stretch reads SRHDSKSRSRSQERRAEEERRRSVSRARSQEKSRSQEKSL. Over residues 333–356 the composition is skewed to basic residues; it reads LKSRSRSRSRSRSRSKDKRKGRKR. Basic and acidic residues-rich tracts occupy residues 357–370 and 394–426; these read SRDE…SKSE and KDTD…RAEG. Phosphoserine is present on residues Ser441, Ser453, and Ser455. Composition is skewed to basic residues over residues 456–469 and 479–489; these read RSKS…RSKS and SRSRSRSHSRS.

Belongs to the splicing factor SR family. Found in a pre-mRNA splicing complex with SRSF4/SFRS4, SRSF5/SFRS5, SNRNP70, SNRPA1, SRRM1 and SRRM2. Interacts with PNN. Post-translationally, extensively phosphorylated on serine residues in the RS domain.

The protein resides in the nucleus speckle. Plays a role in alternative splice site selection during pre-mRNA splicing. Represses the splicing of MAPT/Tau exon 10. This Mus musculus (Mouse) protein is Serine/arginine-rich splicing factor 4 (Srsf4).